The primary structure comprises 570 residues: Sulfite reductase [NADPH] hemoprotein beta-component (570 aa).

[4Fe-4S] cluster-binding residues include cysteine 434, cysteine 440, cysteine 479, and cysteine 483. Position 483 (cysteine 483) interacts with siroheme.

This sequence belongs to the nitrite and sulfite reductase 4Fe-4S domain family. In terms of assembly, alpha(8)-beta(8). The alpha component is a flavoprotein, the beta component is a hemoprotein. It depends on siroheme as a cofactor. [4Fe-4S] cluster is required as a cofactor.

The enzyme catalyses hydrogen sulfide + 3 NADP(+) + 3 H2O = sulfite + 3 NADPH + 4 H(+). The protein operates within sulfur metabolism; hydrogen sulfide biosynthesis; hydrogen sulfide from sulfite (NADPH route): step 1/1. Functionally, component of the sulfite reductase complex that catalyzes the 6-electron reduction of sulfite to sulfide. This is one of several activities required for the biosynthesis of L-cysteine from sulfate. This chain is Sulfite reductase [NADPH] hemoprotein beta-component, found in Salmonella schwarzengrund (strain CVM19633).